The chain runs to 131 residues: Squamosa promoter-binding protein 1 (131 aa).

Over residues 1 to 10 (MDTSKGEGKR) the composition is skewed to basic and acidic residues. Residues 1–52 (MDTSKGEGKRVIKLPGSQEQGEEEDDIGEDSKKTRALTPSGKRASGSTQRSC) are disordered. The SBP-type zinc finger occupies 49–126 (QRSCQVENCA…AGHNERRRKS (78 aa)). Positions 52, 57, 74, 77, 93, 96, 100, and 112 each coordinate Zn(2+). The short motif at 109-125 (KRSCRRRLAGHNERRRK) is the Bipartite nuclear localization signal element.

It localises to the nucleus. Probable transcriptional factor. Binds to the promoter of the SQUAMOSA gene. The protein is Squamosa promoter-binding protein 1 (SBP1) of Antirrhinum majus (Garden snapdragon).